The chain runs to 112 residues: Chaperone NapD (112 aa).

The protein belongs to the NapD family. As to quaternary structure, interacts with the cytoplasmic NapA precursor.

The protein localises to the cytoplasm. Chaperone for NapA, the catalytic subunit of the periplasmic nitrate reductase. It binds directly and specifically to the twin-arginine signal peptide of NapA, preventing premature interaction with the Tat translocase and premature export. The chain is Chaperone NapD from Paracoccus pantotrophus (Thiosphaera pantotropha).